A 622-amino-acid polypeptide reads, in one-letter code: Membrane protein insertase YidC (622 aa).

The chain crosses the membrane as a helical span at residues 6–26 (IVLLIIFSTSLLFLWDAWVKE). Residues 47 to 87 (TQSKNNDGLPIPGSELTASQTGSDLNGIPSSGDTADSVTPR) are disordered. Over residues 62-83 (LTASQTGSDLNGIPSSGDTADS) the composition is skewed to polar residues. The next 3 membrane-spanning stretches (helical) occupy residues 381 to 401 (WGIA…PLSA), 451 to 471 (FPIL…LAAV), and 525 to 545 (PVAF…YSLV). Positions 563-622 (TAPSQDAPESPASKDAPELPVSNQVINDSENTEAPASGPADSPKKPVNIPRRMHKRTRKK) are disordered. Residues 583–596 (VSNQVINDSENTEA) are compositionally biased toward polar residues. Positions 613–622 (RRMHKRTRKK) are enriched in basic residues.

This sequence belongs to the OXA1/ALB3/YidC family. Type 1 subfamily. In terms of assembly, interacts with the Sec translocase complex via SecD. Specifically interacts with transmembrane segments of nascent integral membrane proteins during membrane integration.

The protein localises to the cell inner membrane. In terms of biological role, required for the insertion and/or proper folding and/or complex formation of integral membrane proteins into the membrane. Involved in integration of membrane proteins that insert both dependently and independently of the Sec translocase complex, as well as at least some lipoproteins. Aids folding of multispanning membrane proteins. The protein is Membrane protein insertase YidC of Nitrosomonas eutropha (strain DSM 101675 / C91 / Nm57).